The primary structure comprises 316 residues: Ester hydrolase C11orf54 homolog (316 aa).

Residues H267, H269, and H279 each contribute to the Zn(2+) site.

As to quaternary structure, monomer. It depends on Zn(2+) as a cofactor.

It is found in the nucleus. The protein localises to the cytoplasm. In terms of biological role, exhibits ester hydrolase activity on the substrate p-nitrophenyl acetate, in vitro. May regulate DNA damage and repair by regulating HIF1A degradation via chaperone-mediated autophagy (CMA). The polypeptide is Ester hydrolase C11orf54 homolog (Xenopus laevis (African clawed frog)).